Here is a 292-residue protein sequence, read N- to C-terminus: 4-hydroxy-tetrahydrodipicolinate synthase (292 aa).

A pyruvate-binding site is contributed by threonine 45. Tyrosine 133 serves as the catalytic Proton donor/acceptor. Lysine 161 serves as the catalytic Schiff-base intermediate with substrate. Isoleucine 203 serves as a coordination point for pyruvate.

This sequence belongs to the DapA family. In terms of assembly, homotetramer; dimer of dimers.

It is found in the cytoplasm. It catalyses the reaction L-aspartate 4-semialdehyde + pyruvate = (2S,4S)-4-hydroxy-2,3,4,5-tetrahydrodipicolinate + H2O + H(+). It participates in amino-acid biosynthesis; L-lysine biosynthesis via DAP pathway; (S)-tetrahydrodipicolinate from L-aspartate: step 3/4. Catalyzes the condensation of (S)-aspartate-beta-semialdehyde [(S)-ASA] and pyruvate to 4-hydroxy-tetrahydrodipicolinate (HTPA). The protein is 4-hydroxy-tetrahydrodipicolinate synthase of Aromatoleum aromaticum (strain DSM 19018 / LMG 30748 / EbN1) (Azoarcus sp. (strain EbN1)).